The following is a 146-amino-acid chain: Inclusion membrane protein D (146 aa).

A run of 2 helical transmembrane segments spans residues 38–58 (AAVA…GLLF) and 68–88 (VVAA…ALVG).

It is found in the secreted. Its subcellular location is the host vacuole. The protein localises to the host pathogen-containing vacuole. It localises to the host pathogen-containing vacuole membrane. Functionally, host inclusion membrane protein probably involved in early modification events of the chlamydial inclusion. The sequence is that of Inclusion membrane protein D from Chlamydia trachomatis serovar L2 (strain ATCC VR-902B / DSM 19102 / 434/Bu).